Here is a 209-residue protein sequence, read N- to C-terminus: Uracil phosphoribosyltransferase (209 aa).

Residues Arg-79, Arg-104, and 131–139 (DPMLATGGS) each bind 5-phospho-alpha-D-ribose 1-diphosphate. Uracil-binding positions include Ile-194 and 199–201 (GDA). Asp-200 serves as a coordination point for 5-phospho-alpha-D-ribose 1-diphosphate.

Belongs to the UPRTase family. Mg(2+) serves as cofactor.

It catalyses the reaction UMP + diphosphate = 5-phospho-alpha-D-ribose 1-diphosphate + uracil. It participates in pyrimidine metabolism; UMP biosynthesis via salvage pathway; UMP from uracil: step 1/1. With respect to regulation, allosterically activated by GTP. In terms of biological role, catalyzes the conversion of uracil and 5-phospho-alpha-D-ribose 1-diphosphate (PRPP) to UMP and diphosphate. This is Uracil phosphoribosyltransferase from Lactobacillus delbrueckii subsp. bulgaricus (strain ATCC 11842 / DSM 20081 / BCRC 10696 / JCM 1002 / NBRC 13953 / NCIMB 11778 / NCTC 12712 / WDCM 00102 / Lb 14).